The chain runs to 275 residues: ATP synthase subunit a (275 aa).

The next 7 membrane-spanning stretches (helical) occupy residues 46-66 (RLML…VIAM), 104-124 (FLPV…ASII), 135-155 (IGMP…VGIK), 166-186 (SIVV…IEFI), 204-224 (MLAG…FFFV), 231-251 (IFGV…LLVI), and 252-272 (FLQA…ALHA).

The protein belongs to the ATPase A chain family. In terms of assembly, F-type ATPases have 2 components, CF(1) - the catalytic core - and CF(0) - the membrane proton channel. CF(1) has five subunits: alpha(3), beta(3), gamma(1), delta(1), epsilon(1). CF(0) has three main subunits: a(1), b(2) and c(9-12). The alpha and beta chains form an alternating ring which encloses part of the gamma chain. CF(1) is attached to CF(0) by a central stalk formed by the gamma and epsilon chains, while a peripheral stalk is formed by the delta and b chains.

It localises to the cell membrane. Functionally, key component of the proton channel; it plays a direct role in the translocation of protons across the membrane. The polypeptide is ATP synthase subunit a (Rhodococcus erythropolis (strain PR4 / NBRC 100887)).